Here is a 375-residue protein sequence, read N- to C-terminus: MQCALYDAGRCRSCQWITQSVNEQLSAKTADLHRLLAGLPVEQWCAPTGGPEQHFRNKAKMVVSGSVEKPLFGMLHRDGTPVDLCGCPLYPASFAPVFSALKPFIARAGLTPYNVARKRGELKYLLLTESQFDGGMMLRFVLRSETKLTQLRAALPWLRAQLPQLRVITANIQPVHMAIMEGETEIYLTDQQALAERFNDVPLWIRPQSFFQTNPTVASRLYATARDWVGQLPVRHMWDLFCGVGGFGLHCATPQMQLTGIEIAPEAIACAKQSAAELGLTRLHFQALDSTQFATAQGETPDLVLVNPPRRGIGKPLCDYLAQMAPRFIIYSSCNAQTMAQDIRHLPNYRIQRVQLFDMFPHTAHYEVLTLLCRQ.

Residues C3, C11, C14, and C87 each contribute to the [4Fe-4S] cluster site. S-adenosyl-L-methionine-binding residues include Q212, F241, E262, and N307. Residue C334 is the Nucleophile of the active site.

This sequence belongs to the class I-like SAM-binding methyltransferase superfamily. RNA M5U methyltransferase family. RlmC subfamily.

The catalysed reaction is uridine(747) in 23S rRNA + S-adenosyl-L-methionine = 5-methyluridine(747) in 23S rRNA + S-adenosyl-L-homocysteine + H(+). Catalyzes the formation of 5-methyl-uridine at position 747 (m5U747) in 23S rRNA. This is 23S rRNA (uracil(747)-C(5))-methyltransferase RlmC from Salmonella paratyphi A (strain ATCC 9150 / SARB42).